The primary structure comprises 113 residues: Small ribosomal subunit protein bS16 (113 aa).

The disordered stretch occupies residues 84–113 (PKPAYTEQPKKSAPKKRAQERAAAAAAAAA).

The protein belongs to the bacterial ribosomal protein bS16 family.

The chain is Small ribosomal subunit protein bS16 from Gluconacetobacter diazotrophicus (strain ATCC 49037 / DSM 5601 / CCUG 37298 / CIP 103539 / LMG 7603 / PAl5).